Consider the following 503-residue polypeptide: Probable dolichyl pyrophosphate Man9GlcNAc2 alpha-1,3-glucosyltransferase (503 aa).

Topologically, residues 1–46 (MKERIKDKAWRPQFIKLNNPDTSKKIVSQKSKKPEIVDLSSPGNND) are cytoplasmic. A helical transmembrane segment spans residues 47-67 (LVTISILCVLLCFQLAISLNP). Residues 68–151 (HSGESQPPMY…SRGYESIAHK (84 aa)) are Lumenal-facing. A helical transmembrane segment spans residues 152-172 (LFMRLSAIIPFYIFYLPPLIF). Residues 173 to 181 (YFTRSKKMS) lie on the Cytoplasmic side of the membrane. Residues 182-202 (PILYALALLYPSLLVIDNGHF) form a helical membrane-spanning segment. The Lumenal portion of the chain corresponds to 203–211 (QYNSISLGL). Residues 212-232 (FLATYMFLTKNFTIIGSILFV) form a helical membrane-spanning segment. Residues 233 to 239 (AALNYKQ) lie on the Cytoplasmic side of the membrane. Residues 240–257 (MELYHALPVFVFILARSI) form a helical membrane-spanning segment. The Lumenal portion of the chain corresponds to 258 to 268 (NKTQLFNSFRR). Residues 269–289 (ILTIGLFVVGTFLIIWLPFLL) traverse the membrane as a helical segment. The Cytoplasmic portion of the chain corresponds to 290-332 (TGTAKDVIIRVFPFNRGLYEDKVASFWCAFSFILKRLPLQSVQ). The helical transmembrane segment at 333–353 (IYISTALVLAGSAPSLLVLFL) threads the bilayer. At 354-359 (RPTEKQ) the chain is on the lumenal side. A helical membrane pass occupies residues 360-379 (FRISLTATGLSFFLFSFHVH). Residues 380–382 (EKT) lie on the Cytoplasmic side of the membrane. The chain crosses the membrane as a helical span at residues 383–403 (ILLAAVPALLLISEYTSLVIW). At 404–420 (FLNITNISIFSLCVKDN) the chain is on the lumenal side. Residues 421–441 (FALSLSFFFAYFVVSYAYTAP) form a helical membrane-spanning segment. The Cytoplasmic portion of the chain corresponds to 442–443 (RK). A helical transmembrane segment spans residues 444 to 464 (ISHILTILIGFAICILELYGP). Residues 465 to 474 (SNQRFPHIYQ) are Lumenal-facing. A helical transmembrane segment spans residues 475–495 (LANAFFSCVHFIYFLLYLSFA). Topologically, residues 496 to 503 (SFEKTKKE) are cytoplasmic.

The protein belongs to the ALG6/ALG8 glucosyltransferase family.

It is found in the endoplasmic reticulum membrane. It catalyses the reaction an alpha-D-Man-(1-&gt;2)-alpha-D-Man-(1-&gt;2)-alpha-D-Man-(1-&gt;3)-[alpha-D-Man-(1-&gt;2)-alpha-D-Man-(1-&gt;3)-[alpha-D-Man-(1-&gt;2)-alpha-D-Man-(1-&gt;6)]-alpha-D-Man-(1-&gt;6)]-beta-D-Man-(1-&gt;4)-beta-D-GlcNAc-(1-&gt;4)-alpha-D-GlcNAc-diphospho-di-trans,poly-cis-dolichol + a di-trans,poly-cis-dolichyl beta-D-glucosyl phosphate = an alpha-D-Glc-(1-&gt;3)-alpha-D-Man-(1-&gt;2)-alpha-D-Man-(1-&gt;2)-alpha-D-Man-(1-&gt;3)-[alpha-D-Man-(1-&gt;2)-alpha-D-Man-(1-&gt;3)-[alpha-D-Man-(1-&gt;2)-alpha-D-Man-(1-&gt;6)]-alpha-D-Man-(1-&gt;6)]-beta-D-Man-(1-&gt;4)-beta-D-GlcNAc-(1-&gt;4)-alpha-D-GlcNAc-diphospho-di-trans,poly-cis-dolichol + a di-trans,poly-cis-dolichyl phosphate + H(+). It functions in the pathway protein modification; protein glycosylation. In terms of biological role, adds the first glucose residue to the lipid-linked oligosaccharide precursor for N-linked glycosylation. Transfers glucose from dolichyl phosphate glucose (Dol-P-Glc) onto the lipid-linked oligosaccharide Man(9)GlcNAc(2)-PP-Dol. The protein is Probable dolichyl pyrophosphate Man9GlcNAc2 alpha-1,3-glucosyltransferase of Caenorhabditis elegans.